We begin with the raw amino-acid sequence, 206 residues long: Large ribosomal subunit protein uL4 (206 aa).

The protein belongs to the universal ribosomal protein uL4 family. Part of the 50S ribosomal subunit.

In terms of biological role, one of the primary rRNA binding proteins, this protein initially binds near the 5'-end of the 23S rRNA. It is important during the early stages of 50S assembly. It makes multiple contacts with different domains of the 23S rRNA in the assembled 50S subunit and ribosome. Forms part of the polypeptide exit tunnel. In Xanthobacter autotrophicus (strain ATCC BAA-1158 / Py2), this protein is Large ribosomal subunit protein uL4.